Reading from the N-terminus, the 405-residue chain is SPbeta prophage-derived uncharacterized protein YomR (405 aa).

The stretch at 9-36 forms a coiled coil; sequence QLKQNNIQINSLRGSNDRAEKHMLEHEQ.

This is SPbeta prophage-derived uncharacterized protein YomR (yomR) from Bacillus subtilis (strain 168).